The chain runs to 53 residues: Large ribosomal subunit protein eL40 (53 aa).

This sequence belongs to the eukaryotic ribosomal protein eL40 family.

This chain is Large ribosomal subunit protein eL40, found in Pyrobaculum arsenaticum (strain DSM 13514 / JCM 11321 / PZ6).